We begin with the raw amino-acid sequence, 202 residues long: FMN-dependent NADH:quinone oxidoreductase (202 aa).

Residues serine 10 and 95-98 contribute to the FMN site; that span reads MYNF.

This sequence belongs to the azoreductase type 1 family. As to quaternary structure, homodimer. The cofactor is FMN.

The enzyme catalyses 2 a quinone + NADH + H(+) = 2 a 1,4-benzosemiquinone + NAD(+). It carries out the reaction N,N-dimethyl-1,4-phenylenediamine + anthranilate + 2 NAD(+) = 2-(4-dimethylaminophenyl)diazenylbenzoate + 2 NADH + 2 H(+). Quinone reductase that provides resistance to thiol-specific stress caused by electrophilic quinones. Its function is as follows. Also exhibits azoreductase activity. Catalyzes the reductive cleavage of the azo bond in aromatic azo compounds to the corresponding amines. This is FMN-dependent NADH:quinone oxidoreductase from Pseudoalteromonas atlantica (strain T6c / ATCC BAA-1087).